A 2066-amino-acid chain; its full sequence is MSRNVPRIEMPESEENEFASLSLFSPSRPPLNSIPDPSQIQKANHLPHFDLVQKLEGTRAQHQRTLGPEKKFEVLEGRAGNSSDSNPKIVNRNGKSRSEPNSAQSTPTRNGARVSLGGGCATGARFLQSFGGRGRIPRGVSIAESVSFAETTPHFELNEDHSFWKDHNVQVLIRLRPLGTMERANQGYGKCLKQESPQTLVWLGHPEARFTFDHVASETISQEKLFRVAGLPMVENCLSGYNSCVFAYGQTGSGKTYTMMGEISEAEGSLGEDCGVTARIFEYLFSRIKMEEEERRDENLKFSCKCSFLEIYNEQITDLLEPSSTNLQLREDLGKGVYVENLVEHNVRTVSDVLKLLLQGATNRKIAATRMNSESSRSHSVFTCTIESLWEKDSLTRSRFARLNLVDLAGSERQKSSGAEGDRLKEAANINKSLSTLGLVIMSLVDLAHGKHRHVPYRDSRLTFLLQDSLGGNSKTMIIANVSPSLCSTNETLSTLKFAQRAKLIQNNAKVNEDASGDVTALQQEIRKLKVQLTSLLKNHDSCGALSDCISSLEESRYSGTCKVAGETRQDKCHCQVKNMNDNMIGALRREKIAESALQKSEAEIERIDCLVRDMEEDAKRIKIMLNLREEKVGEMEFCTSGSLMTKECLIEENKTLKGEIKLLRDSIDKNPELTRSALENTKLREQLQRYQKFYEHGEREALLAEVTGLRDQLLDVLEAKDESFSKHVMKENEMEKEFEDCRNMNSSLIRELDEIQAGLGRYLNFDQIQSNVVASSTRGAEQAETMPTISEIQEEVAISHSKNYDRGALVKTDEGIDRSILQFKLGKLMKDLEEARTLNCKYEKDHKSQLSQQEDIEVVREQVETETARTILELQEEVIALQSEFQRRICNLTEENQSIKDTITARESEIRALNQDWEKATLELTNFIVAGSKSIKNASTQIESIICSFPQVNAWIGDYVEKAAKNCIKKEETILLLQKSLEDARILVAEMNLKLNSLKGATIALNEFQLGGNAATTEEAFNLNNDVDRMSDEVDTLESNFKANQYSILKTERHAEAALAVTKWLSDSRDQHQMMEKVQDQSVKEFGTLSSISASLSAEGNADISLSRDGHLSDATYPKGDELSTSSSDFSNCRWQHDCALNVKCQGVSSSESDAQESNNKITSAALIAKNGSAHSVYCGEGRQSVEKPLTIMMGREETEYKCSKPLSSGVYMGLMQRMDPVRTFFDRFEEVNATMKEADLTICELVKANEKSNSVTEMWLQTHEELISKEKNLMDDLEQVKSILSACEEEKQVLLNQTHTTLADMENSVSLLEEYFQEMKRGVEETVEALFSHARLAGKELLQLISNSRPSLEQIASEFMEREFTMYATYQCHIGKLIDQILDQRKQVITPNLSGQETNQSVKINAIGYNAEDEVTKKQSREEIVTGLENDEVVQSHESLLYENLYLKKELERKEALFEGLLFDFRLLQESASNKRDIKNEMDELFDALCKVQLELELKASQVHELFVHNENLENCSIDLKTALFTSQSDLEQAKQRIQILAEQNDELRALVSDLCKEKAAAEEGLDEQRDLVNRLEKEILHLTTTAEKQLLSAVKSIKENLKKTSDEKDQIVDEICSLNNKLELAYAIADEKEAIAVEAHQESEASKIYAEQKEEEVKILEISVEELERTINILERRVYDMDEEVKRHRTTQDSLETELQALRQRLFRFENFTGTMVTTNESTEEYKSHISRSTGLQGAHSQIQVLQKEVAEQTKEIKQLKEYISEILLHSEAQSSAYQEKYKTLEVMIRDFKLEDSSSSAAETISHKTEKSSTRSRGSSSPFRCIVGLVQQMKLEKDQELTMARVRVEELESLLAVKQKEICTLNTRIAAADSMTHDVIRDLLGVKMDITSYAELIDQHQVQRVVEKAQQHAEEILSKEQEVMNLKRHIDYLFKDRESCMSELNKKDTDVLATQISLDQLQERVQLLSMQNEMLKNDKSNLLRKLAELDRTVHNAQASNHRVPQTTKDTASFKLADTDYTKRLENAQKLLSHANNELAKYRKTSNNHPSTRTQGQSSGTRYR.

Disordered regions lie at residues 1-41 and 59-116; these read MSRN…SQIQ and RAQH…RVSL. A compositionally biased stretch (low complexity) spans 20 to 33; that stretch reads SLSLFSPSRPPLNS. Over residues 67–76 the composition is skewed to basic and acidic residues; the sequence is GPEKKFEVLE. The span at 99–109 shows a compositional bias: polar residues; sequence EPNSAQSTPTR. The Kinesin motor domain occupies 168–505; it reads NVQVLIRLRP…LKFAQRAKLI (338 aa). Residue 249-256 participates in ATP binding; it reads GQTGSGKT. Microtubules-binding regions lie at residues 375-379, 406-412, and 454-458; these read SSRSH, VDLAGSE, and HVPYR. 2 coiled-coil regions span residues 1521-1618 and 1650-1772; these read DLKT…VDEI and KIYA…EILL. 2 disordered regions span residues 1803–1823 and 2043–2066; these read SAAE…RGSS and KYRK…TRYR. Residues 1905–2051 are a coiled coil; sequence VQRVVEKAQQ…AKYRKTSNNH (147 aa). Polar residues predominate over residues 2047 to 2066; the sequence is TSNNHPSTRTQGQSSGTRYR.

The protein belongs to the TRAFAC class myosin-kinesin ATPase superfamily. Kinesin family. KIN-12 subfamily. As to quaternary structure, interacts with TAN. Interacts with RANGAP1. As to expression, expressed in tissues enriched in dividing cells, such as root meristems, root primordia, and leaf primordia/young leaves.

The protein localises to the cytoplasm. It localises to the cytoskeleton. Its subcellular location is the phragmoplast. Its function is as follows. Involved in the spatial control of cytokinesis by a proper phragmoplast guidance. Localizes TAN to the cortical division sites (CDS) during cytokinesis via direct binding. The polypeptide is Kinesin-like protein KIN-12C (Arabidopsis thaliana (Mouse-ear cress)).